Consider the following 235-residue polypeptide: (5-formylfuran-3-yl)methyl phosphate synthase (235 aa).

Lys-27 (schiff-base intermediate with substrate) is an active-site residue. Lys-86 acts as the Proton acceptor in catalysis.

It belongs to the MfnB family.

The catalysed reaction is 2 D-glyceraldehyde 3-phosphate = 4-(hydroxymethyl)-2-furancarboxaldehyde phosphate + phosphate + 2 H2O. The protein operates within cofactor biosynthesis; methanofuran biosynthesis. Functionally, catalyzes the formation of 4-(hydroxymethyl)-2-furancarboxaldehyde phosphate (4-HFC-P) from two molecules of glyceraldehyde-3-P (GA-3-P). The protein is (5-formylfuran-3-yl)methyl phosphate synthase of Archaeoglobus fulgidus (strain ATCC 49558 / DSM 4304 / JCM 9628 / NBRC 100126 / VC-16).